We begin with the raw amino-acid sequence, 37 residues long: Calcitonin gene-related peptide 1 (37 aa).

Residues C2 and C7 are joined by a disulfide bond. F37 is modified (phenylalanine amide).

This sequence belongs to the calcitonin family.

It localises to the secreted. Functionally, CGRP1/CALCA is a peptide hormone that induces vasodilation mediated by the CALCRL-RAMP1 receptor complex. Dilates a variety of vessels including the coronary, cerebral and systemic vasculature. Its abundance in the CNS also points toward a neurotransmitter or neuromodulator role. It also elevates platelet cAMP. CGRP1 can also bind and activate CALCR-RAMP1 (AMYR1) receptor complex. This chain is Calcitonin gene-related peptide 1 (CALCA), found in Sus scrofa (Pig).